The chain runs to 318 residues: MRFKGLDLNLLVALDALTTERNLTAAARSINLSQPAMSAAIGRLRDYFRDELFTMNGRELRLTPRAEGLASAVRETLLQVQCSIISWEPFNPSKSDRCFRIVLSDFMMLIYFNKIIERVAREAPAVSFELLPLDSDPYEMLSRGDVDFLIVPEFFLSGAHPSAKLFTEKFVCVACSTNVDLPSALTIEQYVSTGHVAAAFGRFLKPSVEGWFLLENGIQRRVEVVVQGFSLIPPVLRGTNRIANLPLRLVEHYESTFPLRIINLPLPLPVFTEAVQWPALHNADPGSIWFREILVEEASRMMSSNAPKIHGLLQQSGS.

In terms of domain architecture, HTH lysR-type spans 6–63; it reads LDLNLLVALDALTTERNLTAAARSINLSQPAMSAAIGRLRDYFRDELFTMNGRELRLT. Positions 23–42 form a DNA-binding region, H-T-H motif; sequence LTAAARSINLSQPAMSAAIG.

It belongs to the LysR transcriptional regulatory family.

Its function is as follows. NodD regulates the expression of the nodABCFE genes which encode other nodulation proteins. NodD is also a negative regulator of its own expression. Binds flavonoids as inducers. The sequence is that of Nodulation protein D 2 (nodD2) from Rhizobium leguminosarum bv. phaseoli.